Consider the following 223-residue polypeptide: Adapter protein MecA (223 aa).

It belongs to the MecA family. Homodimer.

In terms of biological role, enables the recognition and targeting of unfolded and aggregated proteins to the ClpC protease or to other proteins involved in proteolysis. The chain is Adapter protein MecA from Limosilactobacillus reuteri (strain DSM 20016) (Lactobacillus reuteri).